Here is a 133-residue protein sequence, read N- to C-terminus: Small ribosomal subunit protein uS8 (133 aa).

The protein belongs to the universal ribosomal protein uS8 family. Part of the 30S ribosomal subunit. Contacts proteins S5 and S12.

In terms of biological role, one of the primary rRNA binding proteins, it binds directly to 16S rRNA central domain where it helps coordinate assembly of the platform of the 30S subunit. The sequence is that of Small ribosomal subunit protein uS8 from Rhodopirellula baltica (strain DSM 10527 / NCIMB 13988 / SH1).